Reading from the N-terminus, the 622-residue chain is Procollagen galactosyltransferase 1 (622 aa).

The N-terminal stretch at 1–29 is a signal peptide; it reads MAAAPRAGRRRGQPLLALLLLLLAPLPPG. N-linked (GlcNAc...) asparagine glycans are attached at residues asparagine 96, asparagine 184, and asparagine 381. The span at 588 to 606 shows a compositional bias: basic and acidic residues; sequence RAKSQKMREQQALSREAKN. Residues 588–622 form a disordered region; it reads RAKSQKMREQQALSREAKNSDVLQSPLDSAARDEL. An Endoplasmic reticulum retention motif motif is present at residues 619–622; sequence RDEL.

This sequence belongs to the glycosyltransferase 25 family. Post-translationally, N-glycosylated. As to expression, ubiquitous with higher levels in placenta, heart, lung and spleen.

The protein localises to the endoplasmic reticulum lumen. The catalysed reaction is (5R)-5-hydroxy-L-lysyl-[collagen] + UDP-alpha-D-galactose = (5R)-5-O-(beta-D-galactosyl)-5-hydroxy-L-lysyl-[collagen] + UDP + H(+). Beta-galactosyltransferase that transfers beta-galactose to hydroxylysine residues of type I collagen. By acting on collagen glycosylation, facilitates the formation of collagen triple helix. Also involved in the biosynthesis of collagen type IV. This Homo sapiens (Human) protein is Procollagen galactosyltransferase 1 (COLGALT1).